A 633-amino-acid polypeptide reads, in one-letter code: RpoH suppressor (633 aa).

The PNPLA domain maps to 11-410 (LVMKGGITSG…SSNFPIHLFD (400 aa)). Transmembrane regions (helical) follow at residues 38–58 (NIGG…AAVG), 133–153 (IAPV…YAVG), and 159–179 (IAAA…FAVL). Residues 41 to 45 (GTSAG) carry the GXSXG motif. Catalysis depends on Ser-43, which acts as the Nucleophile. A disordered region spans residues 342 to 380 (ARRESLPGSDGENEAEDTTSDEDEQKTVLDSTEALTTGG). Over residues 352 to 365 (GENEAEDTTSDEDE) the composition is skewed to acidic residues. Catalysis depends on Asp-397, which acts as the Proton acceptor. Residues 397–399 (DGG) carry the DGA/G motif. The disordered stretch occupies residues 605–624 (EGEKWSGEGPDLTKTAPRPL).

It localises to the cell membrane. This protein is non-essential for R.meliloti growth, but induces a heat-shock response in temperature-sensitive E.coli K165 by elevating levels of sigma 32 (mechanism unknown). This Rhizobium meliloti (strain 1021) (Ensifer meliloti) protein is RpoH suppressor (suhR).